A 474-amino-acid polypeptide reads, in one-letter code: Synaptotagmin-17 (474 aa).

Residues 60–112 (WLMASRSSDKDGDSVHTASEVPLTPRTNSPDGRRSSSDTSKSTYSLTRRISSL) are disordered. Residues 96-112 (SDTSKSTYSLTRRISSL) are compositionally biased toward low complexity. Phosphoserine occurs at positions 118 and 119. C2 domains follow at residues 184-310 (QLGM…HWWK) and 321-455 (ELGE…EQWH).

This sequence belongs to the synaptotagmin family.

Its subcellular location is the membrane. In terms of biological role, plays a role in dendrite formation by melanocytes. This Pongo abelii (Sumatran orangutan) protein is Synaptotagmin-17 (SYT17).